A 186-amino-acid chain; its full sequence is MAASESKESPANNPGLHTTIDEATKGYFMQQTMFRIKDPKVSLDFYSRVLGMSLLKRLDFPEMKFSLYFMGYEDTTEAPSNPVDRTVWTFAQKATIELTHNWGTESDPEFKGYHNGNSDPRGFGHIGITVDDTYKACERFQNLGVEFVKKPDDGKMKGIAFIKDPDGYWIELFDRKTIGNVTEGNA.

Residues 28–175 enclose the VOC domain; the sequence is FMQQTMFRIK…DGYWIELFDR (148 aa). Substrate-binding residues include Gln-31 and Arg-35. Zn(2+) is bound at residue Gln-31. Glu-97 lines the Zn(2+) pocket. Residues Asn-101, Arg-121, His-125, and 155-156 contribute to the substrate site; that span reads KM. A Zn(2+)-binding site is contributed by His-125. Glu-171 lines the Zn(2+) pocket. Glu-171 acts as the Proton donor/acceptor in catalysis.

Belongs to the glyoxalase I family. The cofactor is Zn(2+).

The catalysed reaction is (R)-S-lactoylglutathione = methylglyoxal + glutathione. It functions in the pathway secondary metabolite metabolism; methylglyoxal degradation; (R)-lactate from methylglyoxal: step 1/2. Catalyzes the conversion of hemimercaptal, formed from methylglyoxal and glutathione, to S-lactoylglutathione. This is Lactoylglutathione lyase from Cicer arietinum (Chickpea).